The following is a 265-amino-acid chain: 6-carboxyhexanoate--CoA ligase (265 aa).

Belongs to the BioW family. Homodimer. Mg(2+) is required as a cofactor.

The enzyme catalyses heptanedioate + ATP + CoA = 6-carboxyhexanoyl-CoA + AMP + diphosphate. The protein operates within metabolic intermediate metabolism; pimeloyl-CoA biosynthesis; pimeloyl-CoA from pimelate: step 1/1. Catalyzes the transformation of pimelate into pimeloyl-CoA with concomitant hydrolysis of ATP to AMP. The protein is 6-carboxyhexanoate--CoA ligase of Syntrophotalea carbinolica (strain DSM 2380 / NBRC 103641 / GraBd1) (Pelobacter carbinolicus).